Here is a 286-residue protein sequence, read N- to C-terminus: Ribose-phosphate pyrophosphokinase (286 aa).

Residues 34-36 and 91-92 contribute to the ATP site; these read DGE and RQ. The Mg(2+) site is built by H124 and D161. The active site involves K184. Residues R186, D210, and 214–218 each bind D-ribose 5-phosphate; that span reads STGGT.

This sequence belongs to the ribose-phosphate pyrophosphokinase family. Class III (archaeal) subfamily. Mg(2+) is required as a cofactor.

It is found in the cytoplasm. The catalysed reaction is D-ribose 5-phosphate + ATP = 5-phospho-alpha-D-ribose 1-diphosphate + AMP + H(+). It participates in metabolic intermediate biosynthesis; 5-phospho-alpha-D-ribose 1-diphosphate biosynthesis; 5-phospho-alpha-D-ribose 1-diphosphate from D-ribose 5-phosphate (route I): step 1/1. Its function is as follows. Involved in the biosynthesis of the central metabolite phospho-alpha-D-ribosyl-1-pyrophosphate (PRPP) via the transfer of pyrophosphoryl group from ATP to 1-hydroxyl of ribose-5-phosphate (Rib-5-P). The polypeptide is Ribose-phosphate pyrophosphokinase (Thermoplasma acidophilum (strain ATCC 25905 / DSM 1728 / JCM 9062 / NBRC 15155 / AMRC-C165)).